The chain runs to 1479 residues: Type VII secretion system protein EssC (1479 aa).

Residues 1–189 (MHKLIIKYNK…ASSLIRLTQE (189 aa)) form a required for substrate secretion, protein missing this segment is unstable region. The Cytoplasmic portion of the chain corresponds to 1–229 (MHKLIIKYNK…RPPQPIQKNN (229 aa)). A helical transmembrane segment spans residues 230–252 (TVIWRSIIPPLVMIALTVVIFLV). Over 253–256 (RPIG) the chain is Extracellular. A helical transmembrane segment spans residues 257 to 279 (IYILMMIGMSTVTIVFGITTYFS). Over 280–1479 (EKKKYNKDVE…QAYQKIRWFK (1200 aa)) the chain is Cytoplasmic. 2 consecutive FtsK domains span residues 652-846 (DDIL…QDSN) and 997-1183 (QGPM…SEVS). ATP is bound by residues 672 to 679 (GTTGSGKS) and 1014 to 1021 (GSPGYGRT). A required for substrate secretion, truncated protein is stable region spans residues 1249–1479 (MMPDEIKYED…QAYQKIRWFK (231 aa)).

Belongs to the EssC family. Homooligomer. Interacts with EsaE.

Its subcellular location is the cell membrane. Component of the type VII secretion system (Ess). Required for the secretion of substrates including EsxA and EsxB. However, unable to support secretion of the substrate protein EsxC. This chain is Type VII secretion system protein EssC, found in Staphylococcus aureus (strain NCTC 8325 / PS 47).